We begin with the raw amino-acid sequence, 154 residues long: MRKIIIPIITILLIALDQLSKLWIVKHIELNQIKEFIPNIVSLTYLRNYGAAFSILQNQQWLFTLITIFVVGVAIIYLMKHINGSYWLLISLTLIISGGLGNFIDRLRLGYVVDMVHLDFINFAIFNVADSYLTIGIICLMIALWKEESNGNHN.

3 helical membrane passes run 4 to 24, 62 to 82, and 84 to 104; these read IIIP…KLWI, LFTL…MKHI, and GSYW…GNFI. Active-site residues include Asp-114 and Asp-130. The helical transmembrane segment at 125–145 threads the bilayer; that stretch reads IFNVADSYLTIGIICLMIALW.

The protein belongs to the peptidase A8 family.

It localises to the cell membrane. The catalysed reaction is Release of signal peptides from bacterial membrane prolipoproteins. Hydrolyzes -Xaa-Yaa-Zaa-|-(S,diacylglyceryl)Cys-, in which Xaa is hydrophobic (preferably Leu), and Yaa (Ala or Ser) and Zaa (Gly or Ala) have small, neutral side chains.. It participates in protein modification; lipoprotein biosynthesis (signal peptide cleavage). Functionally, this protein specifically catalyzes the removal of signal peptides from prolipoproteins. This chain is Lipoprotein signal peptidase, found in Streptococcus agalactiae serotype V (strain ATCC BAA-611 / 2603 V/R).